Here is a 389-residue protein sequence, read N- to C-terminus: Alanine racemase (389 aa).

Catalysis depends on K48, which acts as the Proton acceptor; specific for D-alanine. At K48 the chain carries N6-(pyridoxal phosphate)lysine. Position 144 (R144) interacts with substrate. The active-site Proton acceptor; specific for L-alanine is the Y281. M329 lines the substrate pocket.

This sequence belongs to the alanine racemase family. Pyridoxal 5'-phosphate is required as a cofactor.

It carries out the reaction L-alanine = D-alanine. The protein operates within amino-acid biosynthesis; D-alanine biosynthesis; D-alanine from L-alanine: step 1/1. Its function is as follows. Catalyzes the interconversion of L-alanine and D-alanine. May also act on other amino acids. The polypeptide is Alanine racemase (alr) (Leptospira interrogans serogroup Icterohaemorrhagiae serovar Lai (strain 56601)).